A 101-amino-acid chain; its full sequence is Small ribosomal subunit protein bS6 (101 aa).

It belongs to the bacterial ribosomal protein bS6 family.

Functionally, binds together with bS18 to 16S ribosomal RNA. This Staphylococcus saprophyticus subsp. saprophyticus (strain ATCC 15305 / DSM 20229 / NCIMB 8711 / NCTC 7292 / S-41) protein is Small ribosomal subunit protein bS6.